The following is a 92-amino-acid chain: UPF0223 protein SERP0684 (92 aa).

It belongs to the UPF0223 family.

This Staphylococcus epidermidis (strain ATCC 35984 / DSM 28319 / BCRC 17069 / CCUG 31568 / BM 3577 / RP62A) protein is UPF0223 protein SERP0684.